The sequence spans 422 residues: UDP-N-acetylglucosamine 1-carboxyvinyltransferase (422 aa).

22 to 23 (KN) is a phosphoenolpyruvate binding site. Arg93 provides a ligand contact to UDP-N-acetyl-alpha-D-glucosamine. The active-site Proton donor is the Cys117. At Cys117 the chain carries 2-(S-cysteinyl)pyruvic acid O-phosphothioketal. UDP-N-acetyl-alpha-D-glucosamine is bound by residues 122-126 (RPVDL), Asp308, and Leu330.

The protein belongs to the EPSP synthase family. MurA subfamily.

The protein localises to the cytoplasm. It carries out the reaction phosphoenolpyruvate + UDP-N-acetyl-alpha-D-glucosamine = UDP-N-acetyl-3-O-(1-carboxyvinyl)-alpha-D-glucosamine + phosphate. It functions in the pathway cell wall biogenesis; peptidoglycan biosynthesis. Functionally, cell wall formation. Adds enolpyruvyl to UDP-N-acetylglucosamine. The protein is UDP-N-acetylglucosamine 1-carboxyvinyltransferase of Helicobacter pylori (strain ATCC 700392 / 26695) (Campylobacter pylori).